The primary structure comprises 194 residues: Large ribosomal subunit protein uL18 (194 aa).

This sequence belongs to the universal ribosomal protein uL18 family. Part of the 50S ribosomal subunit. Contacts the 5S and 23S rRNAs.

In terms of biological role, this is one of the proteins that bind and probably mediate the attachment of the 5S RNA into the large ribosomal subunit, where it forms part of the central protuberance. In Methanococcus aeolicus (strain ATCC BAA-1280 / DSM 17508 / OCM 812 / Nankai-3), this protein is Large ribosomal subunit protein uL18.